The primary structure comprises 214 residues: ATP phosphoribosyltransferase (214 aa).

It belongs to the ATP phosphoribosyltransferase family. Short subfamily. In terms of assembly, heteromultimer composed of HisG and HisZ subunits.

The protein resides in the cytoplasm. The enzyme catalyses 1-(5-phospho-beta-D-ribosyl)-ATP + diphosphate = 5-phospho-alpha-D-ribose 1-diphosphate + ATP. It participates in amino-acid biosynthesis; L-histidine biosynthesis; L-histidine from 5-phospho-alpha-D-ribose 1-diphosphate: step 1/9. Catalyzes the condensation of ATP and 5-phosphoribose 1-diphosphate to form N'-(5'-phosphoribosyl)-ATP (PR-ATP). Has a crucial role in the pathway because the rate of histidine biosynthesis seems to be controlled primarily by regulation of HisG enzymatic activity. This Alcanivorax borkumensis (strain ATCC 700651 / DSM 11573 / NCIMB 13689 / SK2) protein is ATP phosphoribosyltransferase.